The sequence spans 638 residues: Carbon monoxide dehydrogenase (638 aa).

[4Fe-4S] cluster contacts are provided by Cys46, Cys55, Cys58, Cys63, and Cys74. Residues His265, Cys299, Cys343, Cys452, Cys483, and Cys524 each coordinate [Ni-4Fe-5S] cluster.

Belongs to the Ni-containing carbon monoxide dehydrogenase family. Homodimer. The cofactor is [4Fe-4S] cluster. [Ni-4Fe-5S] cluster serves as cofactor.

It carries out the reaction CO + 2 oxidized [2Fe-2S]-[ferredoxin] + H2O = 2 reduced [2Fe-2S]-[ferredoxin] + CO2 + 2 H(+). In terms of biological role, CODH oxidizes carbon monoxide coupled, via CooF, to the reduction of a hydrogen cation by a hydrogenase (possibly CooH). The protein is Carbon monoxide dehydrogenase (cooS) of Methanopyrus kandleri (strain AV19 / DSM 6324 / JCM 9639 / NBRC 100938).